Here is a 381-residue protein sequence, read N- to C-terminus: Homoserine O-succinyltransferase (381 aa).

Residues 45–360 (NAVLVCHALN…PHGHDAFLLD (316 aa)) form the AB hydrolase-1 domain. Ser151 (nucleophile) is an active-site residue. Arg221 contacts substrate. Active-site residues include Asp321 and His354. Residue Asp355 participates in substrate binding.

It belongs to the AB hydrolase superfamily. MetX family. As to quaternary structure, homodimer.

The protein localises to the cytoplasm. The enzyme catalyses L-homoserine + succinyl-CoA = O-succinyl-L-homoserine + CoA. It participates in amino-acid biosynthesis; L-methionine biosynthesis via de novo pathway; O-succinyl-L-homoserine from L-homoserine: step 1/1. Its function is as follows. Transfers a succinyl group from succinyl-CoA to L-homoserine, forming succinyl-L-homoserine. This is Homoserine O-succinyltransferase from Burkholderia pseudomallei (strain 1710b).